A 681-amino-acid polypeptide reads, in one-letter code: Fibulin-1 (681 aa).

A signal peptide spans 1–17 (MDLYMIVLLSLCGLLRA). Cystine bridges form between Cys-29-Cys-55, Cys-30-Cys-62, Cys-43-Cys-63, Cys-72-Cys-103, Cys-85-Cys-104, Cys-106-Cys-125, Cys-107-Cys-138, Cys-114-Cys-139, Cys-162-Cys-171, Cys-167-Cys-176, Cys-178-Cys-191, Cys-197-Cys-210, Cys-204-Cys-219, Cys-225-Cys-237, Cys-243-Cys-256, Cys-250-Cys-265, Cys-271-Cys-283, Cys-289-Cys-301, Cys-317-Cys-330, Cys-336-Cys-348, Cys-343-Cys-357, Cys-359-Cys-372, Cys-378-Cys-390, Cys-386-Cys-399, Cys-401-Cys-414, Cys-420-Cys-429, Cys-440-Cys-454, Cys-460-Cys-473, Cys-469-Cys-482, Cys-484-Cys-498, Cys-504-Cys-517, Cys-511-Cys-526, and Cys-531-Cys-553. Anaphylatoxin-like domains lie at 29–63 (CCED…EQCC), 68–107 (EDSI…CECC), and 108–139 (LLGS…RSCC). Residues 158-192 (TEDQCRAAGCAQRCLNGTCSCLDGFKLKTDGKHCE) form the EGF-like 1 domain. N-linked (GlcNAc...) asparagine glycosylation is present at Asn-173. The EGF-like 2; calcium-binding domain maps to 193 to 238 (DINECLLGPHHCVTGERCINTLGSYRCQREISCGTGYELTDNNKCK). Residues 239–284 (DIDECDLGTHNCAAEMECQNTAGSFRCRPRMQCAAGFIQDALGSCI) enclose the EGF-like 3; calcium-binding domain. Positions 285-331 (DINECVSVTALSRGQMCFNTVGSFICQRHSVTCGRGYHLNAEGTRCV) constitute an EGF-like 4; calcium-binding domain. The EGF-like 5; calcium-binding domain occupies 332-373 (DIDECAGPDNSCDGHGCINLVGSYRCECRTGFIFNSISRSCE). The EGF-like 6; calcium-binding domain maps to 374 to 415 (DIDECRNYPGRLCAHKCENILGSYKCSCTAGFKLADDGRNCD). One can recognise an EGF-like 7; calcium-binding domain in the interval 416-455 (DVNECESSPCSQGCANVYGSYQSYCRRGYQLSDADGITCE). One can recognise an EGF-like 8; calcium-binding domain in the interval 456–499 (DIDECALPTGGHICSYRCHNTPGSFHCTCPASGYTLAANGRSCQ). The region spanning 500 to 554 (DIDECLTGTHSCSESESCFNIQGGFRCLSFDCPANYRRSGDTRPRVDRADIIRCV) is the EGF-like 9; calcium-binding domain.

It belongs to the fibulin family. Homomultimerizes and interacts with various extracellular matrix components such as FN1, LAMA1, NID, AGC1 and CSPG2.

The protein localises to the secreted. It is found in the extracellular space. Its subcellular location is the extracellular matrix. Incorporated into fibronectin-containing matrix fibers. May play a role in cell adhesion and migration along protein fibers within the extracellular matrix (ECM). Could be important for certain developmental processes and contribute to the supramolecular organization of ECM architecture, in particular to those of basement membranes. This chain is Fibulin-1 (fbln1), found in Danio rerio (Zebrafish).